The following is a 235-amino-acid chain: Leucyl/phenylalanyl-tRNA--protein transferase (235 aa).

It belongs to the L/F-transferase family.

It is found in the cytoplasm. The catalysed reaction is N-terminal L-lysyl-[protein] + L-leucyl-tRNA(Leu) = N-terminal L-leucyl-L-lysyl-[protein] + tRNA(Leu) + H(+). It carries out the reaction N-terminal L-arginyl-[protein] + L-leucyl-tRNA(Leu) = N-terminal L-leucyl-L-arginyl-[protein] + tRNA(Leu) + H(+). It catalyses the reaction L-phenylalanyl-tRNA(Phe) + an N-terminal L-alpha-aminoacyl-[protein] = an N-terminal L-phenylalanyl-L-alpha-aminoacyl-[protein] + tRNA(Phe). Functions in the N-end rule pathway of protein degradation where it conjugates Leu, Phe and, less efficiently, Met from aminoacyl-tRNAs to the N-termini of proteins containing an N-terminal arginine or lysine. In Shewanella frigidimarina (strain NCIMB 400), this protein is Leucyl/phenylalanyl-tRNA--protein transferase.